Consider the following 147-residue polypeptide: Delta-latroinsectotoxin-Lhe1a (147 aa).

4 ANK repeats span residues Val-57–Ile-59, Asn-66–Lys-78, Lys-79–Ala-96, and Thr-98–Glu-125.

Belongs to the cationic peptide 01 (latrotoxin) family. 04 (delta-latroinsectotoxin) subfamily. In terms of assembly, homotetramer in membrane. In terms of tissue distribution, expressed by the venom gland.

Its subcellular location is the secreted. The protein localises to the target cell membrane. In terms of biological role, insecticidal presynaptic neurotoxin that induces massive neurotransmitter release at insect (but not vertebrate) neuromuscular junctions. Native toxin forms cation-permeable pores (with high permeability to calcium) in lipid membranes locust muscle membrane and artificial lipid bilayers. May bind to insect neurexin-1 homolog, insect adhesion G protein-coupled receptor L1 homolog, and insect receptor-type tyrosine-protein phosphatase S homolog, and induces neurotransmitter exocytosis both by forming tetrameric pores in membranes and signaling via G protein-coupled receptor. Oligomerization is a process independent of divalent cations. This is Delta-latroinsectotoxin-Lhe1a from Latrodectus hesperus (Western black widow spider).